The sequence spans 292 residues: Lyso-ornithine lipid O-acyltransferase (292 aa).

Residues glycine 11–leucine 31 form a helical membrane-spanning segment. The segment at arginine 258–proline 292 is disordered.

It belongs to the 1-acyl-sn-glycerol-3-phosphate acyltransferase family. OlsA subfamily.

The protein localises to the membrane. The enzyme catalyses a lyso-ornithine lipid + a fatty acyl-[ACP] = an N(2)-[(3R)-3-(acyloxy)acyl]-L-ornithine lipid + holo-[ACP]. It participates in lipid metabolism. Catalyzes the second step in the formation of ornithine lipids, which are phosphorus-free membrane lipids. Uses acyl-acyl carrier protein (acyl-AcpP) as an acyl donor and converts lyso-ornithine lipid (LOL) into ornithine lipid (OL). This Rhizobium meliloti (strain 1021) (Ensifer meliloti) protein is Lyso-ornithine lipid O-acyltransferase.